A 154-amino-acid polypeptide reads, in one-letter code: 6,7-dimethyl-8-ribityllumazine synthase (154 aa).

5-amino-6-(D-ribitylamino)uracil contacts are provided by residues Phe-22, 56–58, and 80–82; these read AFE and AVI. 85–86 is a binding site for (2S)-2-hydroxy-3-oxobutyl phosphate; that stretch reads ET. Catalysis depends on His-88, which acts as the Proton donor. Position 113 (Phe-113) interacts with 5-amino-6-(D-ribitylamino)uracil. Residue Arg-127 participates in (2S)-2-hydroxy-3-oxobutyl phosphate binding.

This sequence belongs to the DMRL synthase family.

The enzyme catalyses (2S)-2-hydroxy-3-oxobutyl phosphate + 5-amino-6-(D-ribitylamino)uracil = 6,7-dimethyl-8-(1-D-ribityl)lumazine + phosphate + 2 H2O + H(+). It participates in cofactor biosynthesis; riboflavin biosynthesis; riboflavin from 2-hydroxy-3-oxobutyl phosphate and 5-amino-6-(D-ribitylamino)uracil: step 1/2. Its function is as follows. Catalyzes the formation of 6,7-dimethyl-8-ribityllumazine by condensation of 5-amino-6-(D-ribitylamino)uracil with 3,4-dihydroxy-2-butanone 4-phosphate. This is the penultimate step in the biosynthesis of riboflavin. This Thermoanaerobacter sp. (strain X514) protein is 6,7-dimethyl-8-ribityllumazine synthase.